The following is a 255-amino-acid chain: tRNA (guanine-N(1)-)-methyltransferase (255 aa).

S-adenosyl-L-methionine contacts are provided by residues Gly117 and 137–142 (IGDYVL).

It belongs to the RNA methyltransferase TrmD family. In terms of assembly, homodimer.

Its subcellular location is the cytoplasm. The enzyme catalyses guanosine(37) in tRNA + S-adenosyl-L-methionine = N(1)-methylguanosine(37) in tRNA + S-adenosyl-L-homocysteine + H(+). Functionally, specifically methylates guanosine-37 in various tRNAs. The chain is tRNA (guanine-N(1)-)-methyltransferase from Glaesserella parasuis serovar 5 (strain SH0165) (Haemophilus parasuis).